Here is a 935-residue protein sequence, read N- to C-terminus: Myocardin (935 aa).

Positions 12 to 27 match the MEF2C-binding motif; it reads IRRKFRSVLQLRLQQR. 3 RPEL repeats span residues 18-43, 62-87, and 106-131; these read SVLQ…PPLK, DSLR…QAST, and DDLN…PMDS. The segment at 37 to 73 is disordered; sequence GLIPPLKGPTEFHDPRKQLDSAKTEDSLRRKGRNRSD. Over residues 46–73 the composition is skewed to basic and acidic residues; sequence TEFHDPRKQLDSAKTEDSLRRKGRNRSD. Residues 153–201 are HDAC5-binding; the sequence is FEDDSSRDGLSPDQARSEDPQGSTGSTPDIKSTEAPLDTIQDLTPGSES. Positions 155–283 are disordered; sequence DDSSRDGLSP…SPPPMDSAYA (129 aa). 2 stretches are compositionally biased toward polar residues: residues 172–182 and 206–216; these read PQGSTGSTPDI and AASQPGNQSDP. Residues 244 to 261 show a composition bias toward basic residues; sequence NRHKKPKDPKPKVKKLKY. Positions 287-322 form a coiled coil; sequence QQQQLFLQLQILSQQQQQQQQQQQQQQQQQQQQQRF. The tract at residues 337 to 378 is disordered; the sequence is EQMARNPNPSSTPLSNTPLSPVKNSISGQTGVSSLKPGPLPP. Residues 342–357 show a composition bias toward low complexity; it reads NPNPSSTPLSNTPLSP. The segment covering 358–369 has biased composition (polar residues); it reads VKNSISGQTGVS. The 35-residue stretch at 380 to 414 folds into the SAP domain; it reads LDDLKVSELRQQLRIRGLPVSGTKTALVDRLRPFQ. Serine 454, serine 458, serine 462, and serine 466 each carry phosphoserine; by GSK3-beta. The tract at residues 498–518 is disordered; that stretch reads ESLLSSLNGGSGPSEPDGLDS. The stretch at 519 to 563 forms a coiled coil; sequence EKDKMLVEKQKVINQLTWKLRQEQRQVEELRMQLQKQKSSCSDQK. Positions 579-605 are disordered; the sequence is SCPFAPQQASGKGQGHSSDSPPPACET. Positions 585 to 597 are enriched in polar residues; sequence QQASGKGQGHSSD. Residues serine 624, serine 628, serine 632, and serine 636 each carry the phosphoserine; by GSK3-beta modification. Residues 654 to 731 are disordered; that stretch reads NNHYFLASSS…DAVKQQMTRS (78 aa). The span at 660 to 691 shows a compositional bias: polar residues; it reads ASSSGAQRENHGVSSPSSSQGCAQMTGLQSSD. The segment covering 695-709 has biased composition (low complexity); that stretch reads PTFSIPSPTFSKSSS. The required for interaction with and ubiquitination by STUB1 stretch occupies residues 714–935; sequence ITQPPSYEDA…SPMDLHLQQW (222 aa). A phosphoserine; by MAPK1 and MAPK3 mark is found at serine 812, serine 859, and serine 866. A Phosphothreonine; by MAPK1 and MAPK3 modification is found at threonine 893.

In terms of assembly, homodimer. Interacts with MLLT7/FOXO4. Interacts with SRF, its association does not depend on specific DNA sequences for ternary complex formation. Interacts (via C-terminal) with EP300 (via CREB-binding domain). Interacts with HDAC4 and HDAC5. Interacts with MEF2C. Interacts (via C-terminus) with STUB1/CHIP. Interacts with PURB. In terms of processing, ubiquitinated; by STUB1/CHIP at the C-terminus, leading to its degradation by the proteasome. Phosphorylation by GSK3B is required for STUB1/CHIP-mediated ubiquitination. Phosphorylation negatively regulates transcriptional activity. Phosphorylated; by GSK3B. As to expression, expressed in smooth muscle cell-containing tissues. Expressed in the heart. Expressed in the aorta and bladder. Weakly expression in the lung, testis and kidney. Weakly expressed in the stomach. Weakly expressed in the intestine and colon. In terms of tissue distribution, expressed in the heart. Predominantly expressed in cardiac muscle. As to expression, predominantly expressed in smooth muscle cell-rich tissues.

Its subcellular location is the nucleus speckle. Its function is as follows. Smooth muscle cells (SM) and cardiac muscle cells-specific transcriptional factor which uses the canonical single or multiple CArG boxes DNA sequence. Acts as a cofactor of serum response factor (SRF) with the potential to modulate SRF-target genes. Plays a crucial role in cardiogenesis, urinary bladder development, and differentiation of the smooth muscle cell lineage (myogenesis). Positively regulates the transcription of genes involved in vascular smooth muscle contraction. In terms of biological role, positively regulates the activation of smooth muscle cell gene promoter regions. Functionally, positively regulates the activation of smooth muscle cell gene promoter regions. Activation of the MYH6 promoter is enhanced in the presence of MEF2C. This chain is Myocardin (Myocd), found in Mus musculus (Mouse).